A 136-amino-acid polypeptide reads, in one-letter code: Galectin-7 (136 aa).

The region spanning 6–136 is the Galectin domain; that stretch reads HKTPLPQGVR…DVQLHSVKIF (131 aa). 70–76 contributes to the a beta-D-galactoside binding site; it reads WGREERG.

In terms of assembly, monomer.

The protein resides in the cytoplasm. It is found in the nucleus. Its subcellular location is the secreted. Its function is as follows. Could be involved in cell-cell and/or cell-matrix interactions necessary for normal growth control. Pro-apoptotic protein that functions intracellularly upstream of JNK activation and cytochrome c release. This Rattus norvegicus (Rat) protein is Galectin-7 (Lgals7).